A 109-amino-acid chain; its full sequence is AFAGILSDADIAAGLQSCQAADSFSCKTFFAKSGLHSKSKDQLTKVFGVIDRDKSGYIEEDELKKFLQNFDGKARDLTDKETAEFLKEGDTDGDGKIGVEEFVVLVTKG.

EF-hand domains follow at residues 38 to 73 (KSKDQLTKVFGVIDRDKSGYIEEDELKKFLQNFDGK) and 77 to 109 (LTDKETAEFLKEGDTDGDGKIGVEEFVVLVTKG). Asp51, Asp53, Ser55, Tyr57, Glu59, Glu62, Asp90, Asp92, Asp94, Lys96, and Glu101 together coordinate Ca(2+).

This sequence belongs to the parvalbumin family.

In terms of biological role, in muscle, parvalbumin is thought to be involved in relaxation after contraction. It binds two calcium ions. The chain is Parvalbumin beta from Boa constrictor (Boa).